The chain runs to 163 residues: NADH-quinone oxidoreductase subunit I (163 aa).

4Fe-4S ferredoxin-type domains lie at 53–83 (LRRYPNGEERCIACKLCEAICPAQAITIEAG) and 94–123 (VRYDIDMVKCIYCGFCQEACPVEAIVEGPN). C63, C66, C69, C73, C103, C106, C109, and C113 together coordinate [4Fe-4S] cluster.

The protein belongs to the complex I 23 kDa subunit family. As to quaternary structure, NDH-1 is composed of 14 different subunits. Subunits NuoA, H, J, K, L, M, N constitute the membrane sector of the complex. It depends on [4Fe-4S] cluster as a cofactor.

The protein resides in the cell inner membrane. It carries out the reaction a quinone + NADH + 5 H(+)(in) = a quinol + NAD(+) + 4 H(+)(out). Functionally, NDH-1 shuttles electrons from NADH, via FMN and iron-sulfur (Fe-S) centers, to quinones in the respiratory chain. The immediate electron acceptor for the enzyme in this species is believed to be ubiquinone. Couples the redox reaction to proton translocation (for every two electrons transferred, four hydrogen ions are translocated across the cytoplasmic membrane), and thus conserves the redox energy in a proton gradient. The chain is NADH-quinone oxidoreductase subunit I from Bartonella tribocorum (strain CIP 105476 / IBS 506).